A 98-amino-acid chain; its full sequence is C-X-C motif chemokine 10 (98 aa).

An N-terminal signal peptide occupies residues 1–21 (MNQSAVLIFCLIFLTLNGTQG). Residue Arg26 is modified to Citrulline. Cystine bridges form between Cys30–Cys57 and Cys32–Cys74.

This sequence belongs to the intercrine alpha (chemokine CxC) family. As to quaternary structure, monomer, dimer, and tetramer. Interacts with CXCR3 (via N-terminus).

The protein localises to the secreted. In terms of biological role, pro-inflammatory cytokine that is involved in a wide variety of processes such as chemotaxis, differentiation, and activation of peripheral immune cells, regulation of cell growth, apoptosis and modulation of angiostatic effects. Plays thereby an important role during viral infections by stimulating the activation and migration of immune cells to the infected sites. Mechanistically, binding of CXCL10 to the CXCR3 receptor activates G protein-mediated signaling and results in downstream activation of phospholipase C-dependent pathway, an increase in intracellular calcium production and actin reorganization. In turn, recruitment of activated Th1 lymphocytes occurs at sites of inflammation. Activation of the CXCL10/CXCR3 axis also plays an important role in neurons in response to brain injury for activating microglia, the resident macrophage population of the central nervous system, and directing them to the lesion site. This recruitment is an essential element for neuronal reorganization. This is C-X-C motif chemokine 10 (CXCL10) from Canis lupus familiaris (Dog).